A 391-amino-acid polypeptide reads, in one-letter code: MRSNYLFTSESVSEGHPDKVADQISDAIVDLYLSRDPEARVACETLVTTQRIIIGGEVRSAVPVSEEEIEKTVRETVREIGYEQTGFDWRTAEFANHLHAQSADIAQGVDAGEDKDEGAGDQGIMFGFATDETPDYMPATLYYAHRILERLAEDRHQKKVDFLEPDAKSQVTLVYENGVPVRASALVLSTQHSPALSSKEGQAKLRDYVKSVYEDVLPKGWMPDDKAIFVNPTGLFEIGGPDGDAGLTGRKIIVDTYGGAAPHGGGAFSGKDPTKVDRSAAYVARYLAKNIVAAGLAKKVTIQLSYAIGVSEPLSLYVDTHGTGTVDEAKIEEVLPKLIRLTPKGIRTHLKLNKPIYKPSAAYGHFGRKADGDFFPWEKLDLVDKLKAAFA.

His-16 lines the ATP pocket. Residue Asp-18 participates in Mg(2+) binding. Glu-44 contributes to the K(+) binding site. Residues Glu-57 and Gln-101 each coordinate L-methionine. Residues 101–111 (QSADIAQGVDA) are flexible loop. Residues 166 to 168 (DAK), Asp-244, 250 to 251 (RK), Ala-267, and Lys-271 each bind ATP. Asp-244 is an L-methionine binding site. Lys-275 serves as a coordination point for L-methionine.

This sequence belongs to the AdoMet synthase family. Homotetramer; dimer of dimers. Requires Mg(2+) as cofactor. K(+) is required as a cofactor.

The protein localises to the cytoplasm. It carries out the reaction L-methionine + ATP + H2O = S-adenosyl-L-methionine + phosphate + diphosphate. It participates in amino-acid biosynthesis; S-adenosyl-L-methionine biosynthesis; S-adenosyl-L-methionine from L-methionine: step 1/1. Its function is as follows. Catalyzes the formation of S-adenosylmethionine (AdoMet) from methionine and ATP. The overall synthetic reaction is composed of two sequential steps, AdoMet formation and the subsequent tripolyphosphate hydrolysis which occurs prior to release of AdoMet from the enzyme. The polypeptide is S-adenosylmethionine synthase (Zymomonas mobilis subsp. mobilis (strain ATCC 31821 / ZM4 / CP4)).